Here is a 211-residue protein sequence, read N- to C-terminus: Probable molybdenum cofactor guanylyltransferase (211 aa).

GTP-binding positions include Leu-21–Gly-23, Lys-33, Asp-84, and Asp-116. Asp-116 contacts Mg(2+).

Belongs to the MobA family. It depends on Mg(2+) as a cofactor.

Its subcellular location is the cytoplasm. The catalysed reaction is Mo-molybdopterin + GTP + H(+) = Mo-molybdopterin guanine dinucleotide + diphosphate. Transfers a GMP moiety from GTP to Mo-molybdopterin (Mo-MPT) cofactor (Moco or molybdenum cofactor) to form Mo-molybdopterin guanine dinucleotide (Mo-MGD) cofactor. The chain is Probable molybdenum cofactor guanylyltransferase from Rhodopirellula baltica (strain DSM 10527 / NCIMB 13988 / SH1).